The sequence spans 132 residues: Small ribosomal subunit protein uS11 (132 aa).

This sequence belongs to the universal ribosomal protein uS11 family. Part of the 30S ribosomal subunit.

Functionally, located on the platform of the 30S subunit. In Sulfolobus acidocaldarius (strain ATCC 33909 / DSM 639 / JCM 8929 / NBRC 15157 / NCIMB 11770), this protein is Small ribosomal subunit protein uS11.